The sequence spans 543 residues: CTP synthase (543 aa).

Residues 1-265 (MTRYIFVTGG…DDFVVERFGL (265 aa)) are amidoligase domain. CTP is bound at residue Ser-13. Ser-13 is a binding site for UTP. Residues 14 to 19 (SLGKGI) and Asp-71 each bind ATP. Positions 71 and 139 each coordinate Mg(2+). CTP contacts are provided by residues 146-148 (DIE), 186-191 (KTKPTQ), and Lys-222. UTP-binding positions include 186–191 (KTKPTQ) and Lys-222. The Glutamine amidotransferase type-1 domain maps to 290–541 (TIAMVGKYME…VKAALAQHQK (252 aa)). Gly-351 contacts L-glutamine. Catalysis depends on Cys-378, which acts as the Nucleophile; for glutamine hydrolysis. L-glutamine contacts are provided by residues 379-382 (LGMQ), Glu-402, and Arg-469. Residues His-514 and Glu-516 contribute to the active site.

This sequence belongs to the CTP synthase family. In terms of assembly, homotetramer.

The catalysed reaction is UTP + L-glutamine + ATP + H2O = CTP + L-glutamate + ADP + phosphate + 2 H(+). It carries out the reaction L-glutamine + H2O = L-glutamate + NH4(+). The enzyme catalyses UTP + NH4(+) + ATP = CTP + ADP + phosphate + 2 H(+). It functions in the pathway pyrimidine metabolism; CTP biosynthesis via de novo pathway; CTP from UDP: step 2/2. Allosterically activated by GTP, when glutamine is the substrate; GTP has no effect on the reaction when ammonia is the substrate. The allosteric effector GTP functions by stabilizing the protein conformation that binds the tetrahedral intermediate(s) formed during glutamine hydrolysis. Inhibited by the product CTP, via allosteric rather than competitive inhibition. Catalyzes the ATP-dependent amination of UTP to CTP with either L-glutamine or ammonia as the source of nitrogen. Regulates intracellular CTP levels through interactions with the four ribonucleotide triphosphates. This chain is CTP synthase, found in Pseudomonas syringae pv. tomato (strain ATCC BAA-871 / DC3000).